A 103-amino-acid chain; its full sequence is Large ribosomal subunit protein bL21 (103 aa).

This sequence belongs to the bacterial ribosomal protein bL21 family. As to quaternary structure, part of the 50S ribosomal subunit. Contacts protein L20.

Functionally, this protein binds to 23S rRNA in the presence of protein L20. This is Large ribosomal subunit protein bL21 from Thermobifida fusca (strain YX).